We begin with the raw amino-acid sequence, 655 residues long: Proprotein convertase subtilisin/kexin type 4 (655 aa).

The first 26 residues, 1–26, serve as a signal peptide directing secretion; sequence MRPSQTELWLGLTLTLALLAVRWASA. A propeptide spanning residues 27 to 110 is cleaved from the precursor; sequence QAPIYVSSWA…QQTLRRRVKR (84 aa). The Peptidase S8 domain maps to 123–437; sequence QWYMNKEIQQ…YGLLDAGLLV (315 aa). Active-site charge relay system residues include aspartate 155, histidine 196, and serine 370. Residues 446–580 form the P/Homo B domain; the sequence is TKPQKKCAIR…TLLLYGTAED (135 aa). An N-linked (GlcNAc...) asparagine glycan is attached at asparagine 472.

The protein belongs to the peptidase S8 family. Furin subfamily. In terms of assembly, the proPCSK4 form interacts with HSPA5; the interaction takes place at the endoplasmic reticulum. In terms of processing, N-glycosylated. Post-translationally, synthesized in the endoplasmic reticulum as a zymogen, is matured by autocatalytic cleavage between the prodomain and the catalytic domain. As to expression, expressed abundantly in the testis since postnatal Day 16. In testis, strongly detected in round and elongated spermatids as well as spermatocytes. Also observed in residual bodies engulfed by Sertoli cells at spermatogenic stages VIII and IX. In ovaries, expressed in macrophage-like cells of the ovarian theca, interstitium and corpora lutea.

The protein localises to the cytoplasmic vesicle. It localises to the secretory vesicle. Its subcellular location is the acrosome membrane. Functionally, proprotein convertase involved in the processing of hormone and other protein precursors at sites comprised of pairs of basic amino acid residues. In males, important for ADAM2 processing as well as other acrosomal proteins with roles in fertilization and critical for normal fertilization events such as sperm capacitation, acrosome reaction and binding of sperm to zona pellucida. Also plays a role in female fertility, involved in the regulation of trophoblast migration and placental development, may be through the proteolytical processing and activation of proteins such as IGF2. May also participate in folliculogenesis in the ovaries. This chain is Proprotein convertase subtilisin/kexin type 4 (Pcsk4), found in Mus musculus (Mouse).